The sequence spans 794 residues: Protein transport protein SEC23 G (794 aa).

Cys-56, Cys-59, Cys-78, and Cys-81 together coordinate Zn(2+). Residues 56-81 are zinc finger-like; it reads CSRCGAVLNPYARVDYQSRIWSCPFC.

This sequence belongs to the SEC23/SEC24 family. SEC23 subfamily. In terms of assembly, component of the coat protein complex II (COPII), composed of at least five proteins: the Sec23/24 complex, the Sec13/31 complex and Sar1. Interacts with SEC24A.

The protein localises to the cytoplasmic vesicle. The protein resides in the COPII-coated vesicle membrane. It is found in the endoplasmic reticulum membrane. It localises to the membrane. Component of the coat protein complex II (COPII) which promotes the formation of transport vesicles from the endoplasmic reticulum (ER). The coat has two main functions, the physical deformation of the endoplasmic reticulum membrane into vesicles and the selection of cargo molecules. This is Protein transport protein SEC23 G from Arabidopsis thaliana (Mouse-ear cress).